Reading from the N-terminus, the 272-residue chain is Putative phosphoenolpyruvate synthase regulatory protein (272 aa).

An ADP-binding site is contributed by 152-159 (GVSRCGKT).

Belongs to the pyruvate, phosphate/water dikinase regulatory protein family. PSRP subfamily.

The enzyme catalyses [pyruvate, water dikinase] + ADP = [pyruvate, water dikinase]-phosphate + AMP + H(+). The catalysed reaction is [pyruvate, water dikinase]-phosphate + phosphate + H(+) = [pyruvate, water dikinase] + diphosphate. Functionally, bifunctional serine/threonine kinase and phosphorylase involved in the regulation of the phosphoenolpyruvate synthase (PEPS) by catalyzing its phosphorylation/dephosphorylation. This chain is Putative phosphoenolpyruvate synthase regulatory protein, found in Pseudomonas savastanoi pv. phaseolicola (strain 1448A / Race 6) (Pseudomonas syringae pv. phaseolicola (strain 1448A / Race 6)).